Reading from the N-terminus, the 130-residue chain is Methylglyoxal synthase (130 aa).

One can recognise an MGS-like domain in the interval 1–130 (MSKPRIALIA…DLARNMQDVC (130 aa)). Substrate-binding positions include His-11, Lys-15, 37 to 40 (TGTT), and 57 to 58 (SG). Catalysis depends on Asp-63, which acts as the Proton donor/acceptor. Position 90 (His-90) interacts with substrate.

The protein belongs to the methylglyoxal synthase family.

The catalysed reaction is dihydroxyacetone phosphate = methylglyoxal + phosphate. Functionally, catalyzes the formation of methylglyoxal from dihydroxyacetone phosphate. This is Methylglyoxal synthase from Burkholderia cenocepacia (strain HI2424).